A 110-amino-acid polypeptide reads, in one-letter code: U1-lycotoxin-Ls1bb (110 aa).

Residues 1–20 (MKFVLLFGVLLVTLFSYSSA) form the signal peptide. A propeptide spanning residues 21-44 (EMLDDFDQADEDELLSLIEKEEAR) is cleaved from the precursor. 4 cysteine pairs are disulfide-bonded: Cys47–Cys62, Cys54–Cys71, Cys61–Cys89, and Cys73–Cys87.

It belongs to the neurotoxin 19 (CSTX) family. 03 subfamily. Expressed by the venom gland.

The protein resides in the secreted. This chain is U1-lycotoxin-Ls1bb, found in Lycosa singoriensis (Wolf spider).